We begin with the raw amino-acid sequence, 105 residues long: Thioredoxin (105 aa).

The Thioredoxin domain occupies 2–105; the sequence is VKQIESKYAF…KLEATINELI (104 aa). An N6-acetyllysine modification is found at Lys3. Lys8 is modified (N6-succinyllysine). Catalysis depends on nucleophile residues Cys32 and Cys35. Residues Cys32 and Cys35 are joined by a disulfide bond. Lys39 bears the N6-acetyllysine mark. S-nitrosocysteine is present on residues Cys62 and Cys69. The residue at position 73 (Cys73) is an S-nitrosocysteine; alternate. N6-acetyllysine; alternate is present on Lys94. Lys94 carries the post-translational modification N6-succinyllysine; alternate.

Belongs to the thioredoxin family. Homodimer; disulfide-linked. Interacts with TXNIP through the redox-active site. Interacts with MAP3K5 and CASP3. Interacts with APEX1; the interaction stimulates the FOS/JUN AP-1 DNA-binding activity in a redox-dependent manner. In the fully reduced protein, both Cys-69 and Cys-73 are nitrosylated in response to nitric oxide (NO). When two disulfide bonds are present in the protein, only Cys-73 is nitrosylated. Cys-73 can serve as donor for nitrosylation of target proteins. As to expression, erythrocytes.

It localises to the nucleus. Its subcellular location is the cytoplasm. It is found in the secreted. Participates in various redox reactions through the reversible oxidation of its active center dithiol to a disulfide and catalyzes dithiol-disulfide exchange reactions. Plays a role in the reversible S-nitrosylation of cysteine residues in target proteins, and thereby contributes to the response to intracellular nitric oxide. Nitrosylates the active site Cys of CASP3 in response to nitric oxide (NO), and thereby inhibits caspase-3 activity. Induces the FOS/JUN AP-1 DNA binding activity in ionizing radiation (IR) cells through its oxidation/reduction status and stimulates AP-1 transcriptional activity. This chain is Thioredoxin (TXN), found in Sus scrofa (Pig).